A 328-amino-acid polypeptide reads, in one-letter code: Stress response kinase A (328 aa).

The Proton acceptor role is filled by Asp-201. Asn-206 and Asp-217 together coordinate Mg(2+). Residue Asp-217 is part of the active site.

It belongs to the SrkA/RdoA protein kinase family. As to quaternary structure, monomer. Mg(2+) serves as cofactor.

The protein resides in the cytoplasm. It carries out the reaction L-seryl-[protein] + ATP = O-phospho-L-seryl-[protein] + ADP + H(+). The enzyme catalyses L-threonyl-[protein] + ATP = O-phospho-L-threonyl-[protein] + ADP + H(+). A protein kinase that phosphorylates Ser and Thr residues. Probably acts to suppress the effects of stress linked to accumulation of reactive oxygen species. Probably involved in the extracytoplasmic stress response. Also has a role in LPS synthesis, through regulation of the galETK expression. Functionally, a protein kinase that phosphorylates Ser and Thr residues. Probably acts to suppress the effects of stress linked to accumulation of reactive oxygen species. Probably involved in the extracytoplasmic stress response. The chain is Stress response kinase A from Shigella flexneri.